Reading from the N-terminus, the 180-residue chain is Adenine phosphoribosyltransferase (180 aa).

Residue S2 is modified to N-acetylserine. Phosphoserine is present on residues S4, S15, and S30. The residue at position 60 (Y60) is a Phosphotyrosine. S66 carries the phosphoserine modification. Residue K114 is modified to N6-acetyllysine. T135 bears the Phosphothreonine mark.

The protein belongs to the purine/pyrimidine phosphoribosyltransferase family. Homodimer.

The protein resides in the cytoplasm. The enzyme catalyses AMP + diphosphate = 5-phospho-alpha-D-ribose 1-diphosphate + adenine. The protein operates within purine metabolism; AMP biosynthesis via salvage pathway; AMP from adenine: step 1/1. Functionally, catalyzes a salvage reaction resulting in the formation of AMP, that is energically less costly than de novo synthesis. The polypeptide is Adenine phosphoribosyltransferase (Rattus norvegicus (Rat)).